The chain runs to 140 residues: NADPH-dependent 7-cyano-7-deazaguanine reductase (140 aa).

Residue Cys51 is the Thioimide intermediate of the active site. The active-site Proton donor is the Asp58. Substrate-binding positions include 73–75 (LES) and 92–93 (HE).

It belongs to the GTP cyclohydrolase I family. QueF type 1 subfamily.

The protein localises to the cytoplasm. The enzyme catalyses 7-aminomethyl-7-carbaguanine + 2 NADP(+) = 7-cyano-7-deazaguanine + 2 NADPH + 3 H(+). It participates in tRNA modification; tRNA-queuosine biosynthesis. Its function is as follows. Catalyzes the NADPH-dependent reduction of 7-cyano-7-deazaguanine (preQ0) to 7-aminomethyl-7-deazaguanine (preQ1). This chain is NADPH-dependent 7-cyano-7-deazaguanine reductase, found in Syntrophus aciditrophicus (strain SB).